The following is a 344-amino-acid chain: S-methyl-5'-thioadenosine phosphorylase (344 aa).

Residues Thr-45, 88–89 (RH), and 121–122 (SA) each bind phosphate. A substrate-binding site is contributed by Met-238. Residue Ser-239 participates in phosphate binding. 262–264 (DYD) provides a ligand contact to substrate.

It belongs to the PNP/MTAP phosphorylase family. MTAP subfamily. In terms of assembly, homotrimer.

The protein resides in the cytoplasm. Its subcellular location is the nucleus. The catalysed reaction is S-methyl-5'-thioadenosine + phosphate = 5-(methylsulfanyl)-alpha-D-ribose 1-phosphate + adenine. It functions in the pathway amino-acid biosynthesis; L-methionine biosynthesis via salvage pathway; S-methyl-5-thio-alpha-D-ribose 1-phosphate from S-methyl-5'-thioadenosine (phosphorylase route): step 1/1. Its function is as follows. Catalyzes the reversible phosphorylation of S-methyl-5'-thioadenosine (MTA) to adenine and 5-methylthioribose-1-phosphate. Involved in the breakdown of MTA, a major by-product of polyamine biosynthesis. Responsible for the first step in the methionine salvage pathway after MTA has been generated from S-adenosylmethionine. Has broad substrate specificity with 6-aminopurine nucleosides as preferred substrates. This Candida albicans (strain SC5314 / ATCC MYA-2876) (Yeast) protein is S-methyl-5'-thioadenosine phosphorylase.